We begin with the raw amino-acid sequence, 310 residues long: Porphobilinogen deaminase (310 aa).

S-(dipyrrolylmethanemethyl)cysteine is present on Cys-242.

Belongs to the HMBS family. As to quaternary structure, monomer. It depends on dipyrromethane as a cofactor.

The enzyme catalyses 4 porphobilinogen + H2O = hydroxymethylbilane + 4 NH4(+). It functions in the pathway porphyrin-containing compound metabolism; protoporphyrin-IX biosynthesis; coproporphyrinogen-III from 5-aminolevulinate: step 2/4. In terms of biological role, tetrapolymerization of the monopyrrole PBG into the hydroxymethylbilane pre-uroporphyrinogen in several discrete steps. This chain is Porphobilinogen deaminase, found in Shewanella pealeana (strain ATCC 700345 / ANG-SQ1).